Reading from the N-terminus, the 697-residue chain is Elongation factor G (697 aa).

In terms of domain architecture, tr-type G spans 10-285; it reads AKTRNIGIMA…GVIDYLPSPL (276 aa). GTP-binding positions include 19 to 26, 83 to 87, and 137 to 140; these read AHIDAGKT, DTPGH, and NKMD.

Belongs to the TRAFAC class translation factor GTPase superfamily. Classic translation factor GTPase family. EF-G/EF-2 subfamily.

The protein resides in the cytoplasm. Its function is as follows. Catalyzes the GTP-dependent ribosomal translocation step during translation elongation. During this step, the ribosome changes from the pre-translocational (PRE) to the post-translocational (POST) state as the newly formed A-site-bound peptidyl-tRNA and P-site-bound deacylated tRNA move to the P and E sites, respectively. Catalyzes the coordinated movement of the two tRNA molecules, the mRNA and conformational changes in the ribosome. This Lactobacillus helveticus (strain DPC 4571) protein is Elongation factor G.